The following is a 489-amino-acid chain: Cobyric acid synthase (489 aa).

In terms of domain architecture, GATase cobBQ-type spans 251-444 (GLIIAVIRLP…LHGIFANDTF (194 aa)). The active-site Nucleophile is the Cys329. The active site involves His436.

This sequence belongs to the CobB/CobQ family. CobQ subfamily.

It functions in the pathway cofactor biosynthesis; adenosylcobalamin biosynthesis. Functionally, catalyzes amidations at positions B, D, E, and G on adenosylcobyrinic A,C-diamide. NH(2) groups are provided by glutamine, and one molecule of ATP is hydrogenolyzed for each amidation. The chain is Cobyric acid synthase from Chloroflexus aurantiacus (strain ATCC 29366 / DSM 635 / J-10-fl).